The chain runs to 653 residues: Macrolide export ATP-binding/permease protein MacB (653 aa).

One can recognise an ABC transporter domain in the interval 6–244 (IELQGVSRSY…PPLLPCSAHP (239 aa)). 42-49 (GSSGSGKS) lines the ATP pocket. Helical transmembrane passes span 275-295 (LLTM…VGLG), 525-545 (FSVL…LGVM), 576-596 (FLIE…LLAL), and 616-636 (WPAV…FGYW).

This sequence belongs to the ABC transporter superfamily. Macrolide exporter (TC 3.A.1.122) family. In terms of assembly, homodimer. Part of the tripartite efflux system MacAB-TolC, which is composed of an inner membrane transporter, MacB, a periplasmic membrane fusion protein, MacA, and an outer membrane component, TolC. The complex forms a large protein conduit and can translocate molecules across both the inner and outer membranes. Interacts with MacA.

It localises to the cell inner membrane. Part of the tripartite efflux system MacAB-TolC. MacB is a non-canonical ABC transporter that contains transmembrane domains (TMD), which form a pore in the inner membrane, and an ATP-binding domain (NBD), which is responsible for energy generation. Confers resistance against macrolides. The chain is Macrolide export ATP-binding/permease protein MacB from Sodalis glossinidius (strain morsitans).